The following is a 282-amino-acid chain: tRNA uridine(34) hydroxylase (282 aa).

The region spanning 128–222 is the Rhodanese domain; that stretch reads EGRPVVMLDT…YFEEVGGDHY (95 aa). The active-site Cysteine persulfide intermediate is the Cys182.

The protein belongs to the TrhO family.

It carries out the reaction uridine(34) in tRNA + AH2 + O2 = 5-hydroxyuridine(34) in tRNA + A + H2O. Functionally, catalyzes oxygen-dependent 5-hydroxyuridine (ho5U) modification at position 34 in tRNAs. In Cupriavidus pinatubonensis (strain JMP 134 / LMG 1197) (Cupriavidus necator (strain JMP 134)), this protein is tRNA uridine(34) hydroxylase.